A 517-amino-acid polypeptide reads, in one-letter code: Transmembrane protein 180 (517 aa).

The Extracellular segment spans residues 1-11; sequence MRLGGPWAWLL. A helical transmembrane segment spans residues 12-43; that stretch reads GLPTAVVYGSLALFVSVLHNVFLLYYVDTFVS. At 44 to 55 the chain is on the cytoplasmic side; sequence VYKIDKAAFWVG. The chain crosses the membrane as a helical span at residues 56–74; that stretch reads ETVFLLWNSLNDPLFGWLS. Topologically, residues 75 to 100 are extracellular; sequence DRQFLSSQPRSGAGLSSRAVVLARVR. The chain crosses the membrane as a helical span at residues 101-118; sequence ALGWHGPLLALSFLAFWV. The Cytoplasmic segment spans residues 119–126; it reads PWAPAGLQ. The helical transmembrane segment at 127 to 151 threads the bilayer; that stretch reads FLLCLCLYDGFLTLVDLHHHALLAD. At 152–155 the chain is on the extracellular side; that stretch reads LALS. A helical membrane pass occupies residues 156–179; the sequence is AHDRTHLNFYCSLFSAAGSLSVFA. Residues 180–191 are Cytoplasmic-facing; that stretch reads SYAFWNKEDFSS. The helical transmembrane segment at 192-223 threads the bilayer; it reads FRAFCLALATGSGLGFVGAARLLRRRVEAAGR. Topologically, residues 224–264 are extracellular; that stretch reads EPGCPAMAVNDGLCEEELLVGGEEAGSITLGQYLQQLARHR. Residues 265 to 292 form a helical membrane-spanning segment; the sequence is NFLWFVGMDLVQVFHCHFNSNFFPLFLE. The Cytoplasmic segment spans residues 293–305; it reads HLLSDHISLSTGS. Residues 306–325 traverse the membrane as a helical segment; it reads FLLGISYVAPHLNNLYFLPL. Over 326 to 330 the chain is Extracellular; sequence CRRWG. The chain crosses the membrane as a helical span at residues 331–350; the sequence is VYAVVRGLFLLKLGLSLLML. Topologically, residues 351 to 358 are cytoplasmic; that stretch reads LAGPDHPG. A helical transmembrane segment spans residues 359-393; the sequence is LLCLFIASNRVFTEGTCKLLTLVVTDLVDEDLVLN. The Extracellular segment spans residues 394–402; that stretch reads HRKQAASAL. The helical transmembrane segment at 403–429 threads the bilayer; that stretch reads LFGMVALVTKPGQTFAPLLGTWLLCFY. The Cytoplasmic portion of the chain corresponds to 430-466; the sequence is TGHDLFQQHPPAPVGSAQPWPEPPAPPPAQAPPLRQG. Residues 467-485 form a helical membrane-spanning segment; that stretch reads CFYLLVLVPIACALLQLFT. Over 486–517 the chain is Extracellular; sequence WSQFTLHGRRLHMVKAQRQSLSRAQTLDVKMV.

The protein resides in the cell membrane. In Bos taurus (Bovine), this protein is Transmembrane protein 180.